We begin with the raw amino-acid sequence, 339 residues long: Lipoate--protein ligase (339 aa).

Residues 31 to 221 (FLDDDILFPY…QLLQIETISQ (191 aa)) form the BPL/LPL catalytic domain. ATP contacts are provided by residues Arg-73, 78 to 81 (GAVY), Lys-135, and Ala-139. Residue Lys-135 participates in (R)-lipoate binding.

The protein belongs to the LplA family.

The catalysed reaction is L-lysyl-[lipoyl-carrier protein] + (R)-lipoate + ATP = N(6)-[(R)-lipoyl]-L-lysyl-[lipoyl-carrier protein] + AMP + diphosphate + H(+). It functions in the pathway protein modification; protein lipoylation via exogenous pathway; protein N(6)-(lipoyl)lysine from lipoate: step 1/2. The protein operates within protein modification; protein lipoylation via exogenous pathway; protein N(6)-(lipoyl)lysine from lipoate: step 2/2. Its function is as follows. Catalyzes specifically the lipoylation of GcvH-L (SpyM50867), likely via the ATP-dependent activation of lipoate to lipoyl-AMP and the transfer of the activated lipoyl onto the lipoyl domain of the target protein. The polypeptide is Lipoate--protein ligase (Streptococcus pyogenes serotype M5 (strain Manfredo)).